The chain runs to 60 residues: Large ribosomal subunit protein bL32 (60 aa).

The protein belongs to the bacterial ribosomal protein bL32 family.

The sequence is that of Large ribosomal subunit protein bL32 from Thermosipho melanesiensis (strain DSM 12029 / CIP 104789 / BI429).